A 311-amino-acid polypeptide reads, in one-letter code: Burkholderia TALE-like protein 3 (311 aa).

The Cryptic repeat -1 repeat unit spans residues Leu19–Val50. The stretch at Leu51–Gly83 is one Cryptic repeat 0 repeat. 6 Core repeat repeats span residues Phe84–Gly116, Phe117–Asp149, Tyr150–Gly182, Tyr183–Gly215, Tyr216–Gly248, and Tyr249–Gly281. One copy of the Cryptic repeat +1 repeat lies at Arg282 to Gln311.

It belongs to the transcription activator-like effector (TALE) family. Bat subfamily.

Its function is as follows. Does not bind DNA, probably because it has too few core repeats. The polypeptide is Burkholderia TALE-like protein 3 (Mycetohabitans rhizoxinica (strain DSM 19002 / CIP 109453 / HKI 454) (Paraburkholderia rhizoxinica)).